We begin with the raw amino-acid sequence, 316 residues long: Transaldolase (316 aa).

K127 serves as the catalytic Schiff-base intermediate with substrate.

This sequence belongs to the transaldolase family. Type 2 subfamily.

The protein localises to the cytoplasm. It catalyses the reaction D-sedoheptulose 7-phosphate + D-glyceraldehyde 3-phosphate = D-erythrose 4-phosphate + beta-D-fructose 6-phosphate. It functions in the pathway carbohydrate degradation; pentose phosphate pathway; D-glyceraldehyde 3-phosphate and beta-D-fructose 6-phosphate from D-ribose 5-phosphate and D-xylulose 5-phosphate (non-oxidative stage): step 2/3. Functionally, transaldolase is important for the balance of metabolites in the pentose-phosphate pathway. This chain is Transaldolase, found in Helicobacter pylori (strain HPAG1).